We begin with the raw amino-acid sequence, 493 residues long: Dihydro-heme d1 dehydrogenase (493 aa).

The first 18 residues, 1-18 (MRLIGLALGLLLGALAQA), serve as a signal peptide directing secretion. Residues 19-96 (GEAPGEALYR…ALVAYLYQAP (78 aa)) form the Cytochrome c domain. Residues Cys31, Cys34, His35, Arg68, and Met73 each contribute to the heme c site. A D1-heme domain region spans residues 114–468 (PHPLATLPSR…YDAHSLEEVK (355 aa)). Heme d1 is bound by residues His165, Gly167, Lys169, Arg182, Arg207, Asn208, His341, Arg390, and His435. Arg182 is a binding site for heme c.

Belongs to the cytochrome c family. Monomer. Requires heme c as cofactor.

The protein resides in the periplasm. It carries out the reaction dihydro-heme d1 + A = heme d1 + AH2. It functions in the pathway porphyrin-containing compound metabolism. Involved in heme d1 biosynthesis. Catalyzes the introduction of a double bond into the propionate side chain of pyrrole ring D of dihydro-heme d1, therefore converting dihydro-heme d1 to heme d1. In Pseudomonas aeruginosa (strain ATCC 15692 / DSM 22644 / CIP 104116 / JCM 14847 / LMG 12228 / 1C / PRS 101 / PAO1), this protein is Dihydro-heme d1 dehydrogenase.